Consider the following 391-residue polypeptide: Phosphoglycerate kinase (391 aa).

Substrate-binding positions include 21 to 23, R36, 59 to 62, R113, and R146; these read DLN and HLGR. ATP contacts are provided by residues K197, E319, and 345–348; that span reads GGDT.

This sequence belongs to the phosphoglycerate kinase family. As to quaternary structure, monomer.

The protein resides in the cytoplasm. It carries out the reaction (2R)-3-phosphoglycerate + ATP = (2R)-3-phospho-glyceroyl phosphate + ADP. It functions in the pathway carbohydrate degradation; glycolysis; pyruvate from D-glyceraldehyde 3-phosphate: step 2/5. This Xylella fastidiosa (strain Temecula1 / ATCC 700964) protein is Phosphoglycerate kinase.